The following is a 365-amino-acid chain: tRNA/tmRNA (uracil-C(5))-methyltransferase (365 aa).

Residues Q189, Y217, N222, E238, and D298 each coordinate S-adenosyl-L-methionine. Residue C323 is the Nucleophile of the active site. The active-site Proton acceptor is E357.

The protein belongs to the class I-like SAM-binding methyltransferase superfamily. RNA M5U methyltransferase family. TrmA subfamily.

The catalysed reaction is uridine(54) in tRNA + S-adenosyl-L-methionine = 5-methyluridine(54) in tRNA + S-adenosyl-L-homocysteine + H(+). It catalyses the reaction uridine(341) in tmRNA + S-adenosyl-L-methionine = 5-methyluridine(341) in tmRNA + S-adenosyl-L-homocysteine + H(+). Dual-specificity methyltransferase that catalyzes the formation of 5-methyluridine at position 54 (m5U54) in all tRNAs, and that of position 341 (m5U341) in tmRNA (transfer-mRNA). The protein is tRNA/tmRNA (uracil-C(5))-methyltransferase of Shewanella sp. (strain W3-18-1).